The following is an 869-amino-acid chain: Probable beta-glucosidase F (869 aa).

Residues Met1–Ser19 form the signal peptide. Residues Asn69, Asn77, and Asn261 are each glycosylated (N-linked (GlcNAc...) asparagine). Asp289 is an active-site residue. Asn332, Asn364, Asn399, Asn425, and Asn478 each carry an N-linked (GlcNAc...) asparagine glycan. Residues Ala678–Asn698 are disordered. Pro residues predominate over residues Pro681–Thr691. N-linked (GlcNAc...) asparagine glycosylation occurs at Asn728.

The protein belongs to the glycosyl hydrolase 3 family.

The protein localises to the secreted. The enzyme catalyses Hydrolysis of terminal, non-reducing beta-D-glucosyl residues with release of beta-D-glucose.. It participates in glycan metabolism; cellulose degradation. Beta-glucosidases are one of a number of cellulolytic enzymes involved in the degradation of cellulosic biomass. Catalyzes the last step releasing glucose from the inhibitory cellobiose. The sequence is that of Probable beta-glucosidase F (bglF) from Neosartorya fischeri (strain ATCC 1020 / DSM 3700 / CBS 544.65 / FGSC A1164 / JCM 1740 / NRRL 181 / WB 181) (Aspergillus fischerianus).